The chain runs to 488 residues: Ribulose bisphosphate carboxylase large chain (488 aa).

Residues asparagine 127 and threonine 177 each contribute to the substrate site. Lysine 179 (proton acceptor) is an active-site residue. Lysine 181 contacts substrate. 3 residues coordinate Mg(2+): lysine 205, aspartate 207, and glutamate 208. Lysine 205 is modified (N6-carboxylysine). The active-site Proton acceptor is histidine 297. Positions 298, 330, and 382 each coordinate substrate.

The protein belongs to the RuBisCO large chain family. Type I subfamily. In terms of assembly, heterohexadecamer of 8 large chains and 8 small chains. The cofactor is Mg(2+).

It localises to the plastid. Its subcellular location is the chloroplast. It carries out the reaction 2 (2R)-3-phosphoglycerate + 2 H(+) = D-ribulose 1,5-bisphosphate + CO2 + H2O. The enzyme catalyses D-ribulose 1,5-bisphosphate + O2 = 2-phosphoglycolate + (2R)-3-phosphoglycerate + 2 H(+). RuBisCO catalyzes two reactions: the carboxylation of D-ribulose 1,5-bisphosphate, the primary event in carbon dioxide fixation, as well as the oxidative fragmentation of the pentose substrate in the photorespiration process. Both reactions occur simultaneously and in competition at the same active site. This Ectocarpus siliculosus (Brown alga) protein is Ribulose bisphosphate carboxylase large chain.